Consider the following 333-residue polypeptide: MDLRALLRKLGHGQSLNADEAYILGKGILTGTLSEVEIAASLTAMKVRGETAEEVAGFVKMAREFAVRVPLTVEAIDTAGTGGDGAGTINLSTAAAIVAAAAGAKVLKHGNRSASGMFGSADFMEAVGYNLEIGPERAARLVEEVGFAFVFAPKYHPAFARVAPVRRQLPFRTVFNIVGPLANPGLVKRQLIGVAETRLLDVISEAAARLGFEHAVVVHGSGVDEVTTEGETVVYEVRKGAAERYTISPGDLGAPRVPLPRASSKEEAVAKALAGLRGELLEASIAIAVNAAFALYVAGVVKDVKDGYELAINTIREGAAYRKLMEAVESSKT.

Residues Gly-80, 83–84 (GD), Thr-88, 90–93 (NLST), 108–116 (KHGNRSASG), and Ser-120 each bind 5-phospho-alpha-D-ribose 1-diphosphate. Gly-80 is an anthranilate binding site. Position 92 (Ser-92) interacts with Mg(2+). Position 111 (Asn-111) interacts with anthranilate. Arg-166 provides a ligand contact to anthranilate. 2 residues coordinate Mg(2+): Asp-224 and Glu-225.

This sequence belongs to the anthranilate phosphoribosyltransferase family. As to quaternary structure, homodimer. Requires Mg(2+) as cofactor.

The enzyme catalyses N-(5-phospho-beta-D-ribosyl)anthranilate + diphosphate = 5-phospho-alpha-D-ribose 1-diphosphate + anthranilate. Its pathway is amino-acid biosynthesis; L-tryptophan biosynthesis; L-tryptophan from chorismate: step 2/5. Catalyzes the transfer of the phosphoribosyl group of 5-phosphorylribose-1-pyrophosphate (PRPP) to anthranilate to yield N-(5'-phosphoribosyl)-anthranilate (PRA). The chain is Anthranilate phosphoribosyltransferase from Pyrobaculum aerophilum (strain ATCC 51768 / DSM 7523 / JCM 9630 / CIP 104966 / NBRC 100827 / IM2).